Here is an 89-residue protein sequence, read N- to C-terminus: MSITAERKQALIKDFGAKDGDTGSPEVQVAILTERITNLTGHFKSHHKDNHSRRGLLKLVSQRRSLLDYLKKKDEGRYKSLIERLGIRR.

The protein belongs to the universal ribosomal protein uS15 family. In terms of assembly, part of the 30S ribosomal subunit. Forms a bridge to the 50S subunit in the 70S ribosome, contacting the 23S rRNA.

In terms of biological role, one of the primary rRNA binding proteins, it binds directly to 16S rRNA where it helps nucleate assembly of the platform of the 30S subunit by binding and bridging several RNA helices of the 16S rRNA. Its function is as follows. Forms an intersubunit bridge (bridge B4) with the 23S rRNA of the 50S subunit in the ribosome. This Xanthobacter autotrophicus (strain ATCC BAA-1158 / Py2) protein is Small ribosomal subunit protein uS15.